Consider the following 430-residue polypeptide: Histidine--tRNA ligase (430 aa).

Belongs to the class-II aminoacyl-tRNA synthetase family. In terms of assembly, homodimer.

The protein resides in the cytoplasm. It carries out the reaction tRNA(His) + L-histidine + ATP = L-histidyl-tRNA(His) + AMP + diphosphate + H(+). This chain is Histidine--tRNA ligase, found in Acinetobacter baylyi (strain ATCC 33305 / BD413 / ADP1).